An 82-amino-acid chain; its full sequence is Large ribosomal subunit protein bL31B (82 aa).

The protein belongs to the bacterial ribosomal protein bL31 family. Type B subfamily. As to quaternary structure, part of the 50S ribosomal subunit.

The sequence is that of Large ribosomal subunit protein bL31B from Bacillus velezensis (strain DSM 23117 / BGSC 10A6 / LMG 26770 / FZB42) (Bacillus amyloliquefaciens subsp. plantarum).